The sequence spans 587 residues: 2-succinyl-5-enolpyruvyl-6-hydroxy-3-cyclohexene-1-carboxylate synthase (587 aa).

It belongs to the TPP enzyme family. MenD subfamily. As to quaternary structure, homodimer. Mg(2+) is required as a cofactor. Mn(2+) serves as cofactor. Requires thiamine diphosphate as cofactor.

It catalyses the reaction isochorismate + 2-oxoglutarate + H(+) = 5-enolpyruvoyl-6-hydroxy-2-succinyl-cyclohex-3-ene-1-carboxylate + CO2. It participates in quinol/quinone metabolism; 1,4-dihydroxy-2-naphthoate biosynthesis; 1,4-dihydroxy-2-naphthoate from chorismate: step 2/7. Its pathway is quinol/quinone metabolism; menaquinone biosynthesis. In terms of biological role, catalyzes the thiamine diphosphate-dependent decarboxylation of 2-oxoglutarate and the subsequent addition of the resulting succinic semialdehyde-thiamine pyrophosphate anion to isochorismate to yield 2-succinyl-5-enolpyruvyl-6-hydroxy-3-cyclohexene-1-carboxylate (SEPHCHC). The sequence is that of 2-succinyl-5-enolpyruvyl-6-hydroxy-3-cyclohexene-1-carboxylate synthase from Chloroflexus aurantiacus (strain ATCC 29366 / DSM 635 / J-10-fl).